The sequence spans 355 residues: Holliday junction branch migration complex subunit RuvB (355 aa).

The tract at residues 4-190 (TDKLAAERII…FGIVARLEFY (187 aa)) is large ATPase domain (RuvB-L). ATP is bound by residues Leu29, Arg30, Gly71, Lys74, Thr75, Thr76, 137-139 (EDY), Arg180, Tyr190, and Arg227. Thr75 is a Mg(2+) binding site. Positions 191 to 261 (DAEQLSRIVR…VADAALAMLD (71 aa)) are small ATPAse domain (RuvB-S). A head domain (RuvB-H) region spans residues 264 to 355 (PVGFDLMDRK…GSMWNTPDGA (92 aa)). 3 residues coordinate DNA: Arg300, Arg319, and Arg324.

The protein belongs to the RuvB family. As to quaternary structure, homohexamer. Forms an RuvA(8)-RuvB(12)-Holliday junction (HJ) complex. HJ DNA is sandwiched between 2 RuvA tetramers; dsDNA enters through RuvA and exits via RuvB. An RuvB hexamer assembles on each DNA strand where it exits the tetramer. Each RuvB hexamer is contacted by two RuvA subunits (via domain III) on 2 adjacent RuvB subunits; this complex drives branch migration. In the full resolvosome a probable DNA-RuvA(4)-RuvB(12)-RuvC(2) complex forms which resolves the HJ.

The protein resides in the cytoplasm. It catalyses the reaction ATP + H2O = ADP + phosphate + H(+). Functionally, the RuvA-RuvB-RuvC complex processes Holliday junction (HJ) DNA during genetic recombination and DNA repair, while the RuvA-RuvB complex plays an important role in the rescue of blocked DNA replication forks via replication fork reversal (RFR). RuvA specifically binds to HJ cruciform DNA, conferring on it an open structure. The RuvB hexamer acts as an ATP-dependent pump, pulling dsDNA into and through the RuvAB complex. RuvB forms 2 homohexamers on either side of HJ DNA bound by 1 or 2 RuvA tetramers; 4 subunits per hexamer contact DNA at a time. Coordinated motions by a converter formed by DNA-disengaged RuvB subunits stimulates ATP hydrolysis and nucleotide exchange. Immobilization of the converter enables RuvB to convert the ATP-contained energy into a lever motion, pulling 2 nucleotides of DNA out of the RuvA tetramer per ATP hydrolyzed, thus driving DNA branch migration. The RuvB motors rotate together with the DNA substrate, which together with the progressing nucleotide cycle form the mechanistic basis for DNA recombination by continuous HJ branch migration. Branch migration allows RuvC to scan DNA until it finds its consensus sequence, where it cleaves and resolves cruciform DNA. This is Holliday junction branch migration complex subunit RuvB from Burkholderia vietnamiensis (strain G4 / LMG 22486) (Burkholderia cepacia (strain R1808)).